We begin with the raw amino-acid sequence, 330 residues long: SUMO-activating enzyme subunit 1 (330 aa).

This sequence belongs to the ubiquitin-activating E1 family. In terms of assembly, heterodimer of sae1 and sae2. The complex binds sumo via sae2.

It localises to the nucleus. Its pathway is protein modification; protein sumoylation. In terms of biological role, the dimeric enzyme acts as an E1 ligase for sumo. It mediates ATP-dependent activation of sumo and formation of a thioester with a conserved cysteine residue on sae2. The chain is SUMO-activating enzyme subunit 1 (sae1) from Dictyostelium discoideum (Social amoeba).